We begin with the raw amino-acid sequence, 578 residues long: Probable arginine--tRNA ligase, mitochondrial (578 aa).

Residues M1–V16 constitute a mitochondrion transit peptide. Residues S133 to N135, H144, Y322, D326, and Q350 each bind L-arginine. Residues S133–H144 carry the 'HIGH' region motif. At K568 the chain carries N6-acetyllysine.

This sequence belongs to the class-I aminoacyl-tRNA synthetase family.

The protein localises to the mitochondrion membrane. The catalysed reaction is tRNA(Arg) + L-arginine + ATP = L-arginyl-tRNA(Arg) + AMP + diphosphate. Functionally, catalyzes the attachment of arginine to tRNA(Arg) in a two-step reaction: arginine is first activated by ATP to form Arg-AMP and then transferred to the acceptor end of tRNA(Arg). This chain is Probable arginine--tRNA ligase, mitochondrial (RARS2), found in Homo sapiens (Human).